The sequence spans 149 residues: MRAVVQRVISSKVEVDGKVIGSIGKGLNVLLGISKEDTEEDIKYLKEKIINLRIFEDENEKLNKSLLDIGGDIIIVSQFTLYGDCRKGRRPSFIEALGGEEAYILYNKFIESIKKEVNNVATGEFGADMKVYIENDGPVTILLDSKKTF.

A Gly-cisPro motif, important for rejection of L-amino acids motif is present at residues 137 to 138; sequence GP.

This sequence belongs to the DTD family. In terms of assembly, homodimer.

The protein resides in the cytoplasm. It catalyses the reaction glycyl-tRNA(Ala) + H2O = tRNA(Ala) + glycine + H(+). The catalysed reaction is a D-aminoacyl-tRNA + H2O = a tRNA + a D-alpha-amino acid + H(+). An aminoacyl-tRNA editing enzyme that deacylates mischarged D-aminoacyl-tRNAs. Also deacylates mischarged glycyl-tRNA(Ala), protecting cells against glycine mischarging by AlaRS. Acts via tRNA-based rather than protein-based catalysis; rejects L-amino acids rather than detecting D-amino acids in the active site. By recycling D-aminoacyl-tRNA to D-amino acids and free tRNA molecules, this enzyme counteracts the toxicity associated with the formation of D-aminoacyl-tRNA entities in vivo and helps enforce protein L-homochirality. This is D-aminoacyl-tRNA deacylase from Clostridium botulinum (strain Loch Maree / Type A3).